The sequence spans 477 residues: M-phase inducer phosphatase 3 (477 aa).

Residues M1–S20 form a disordered region. At S2 the chain carries N-acetylserine. S20 and S38 each carry phosphoserine. T48 is modified (phosphothreonine; by CDK1). S58, S62, and S65 each carry phosphoserine. T68 is subject to Phosphothreonine; by CDK1. S123 bears the Phosphoserine; by CDK1 mark. S130 carries the phosphoserine modification. Phosphothreonine is present on T131. A Phosphoserine; by CDK1 modification is found at S169. S192 and S199 each carry phosphoserine; by PLK3. The residue at position 218 (S218) is a Phosphoserine; by CDK1. S220 bears the Phosphoserine; by CHEK1, CHEK2, BRSK1, MAPK14 AND MARK3 mark. The Rhodanese domain maps to L325 to E432. The active site involves C381. Position 476 is a phosphoserine (S476).

The protein belongs to the MPI phosphatase family. In terms of assembly, interacts with MAPK14 and 14-3-3 proteins. When phosphorylated on Ser-130 and/or Thr-131, interacts with PLK1. Interacts with MARK3/C-TAK1. Phosphorylated by CHEK1 and MAPK14 at Ser-220. This phosphorylation creates a binding site for 14-3-3 protein and inhibits the phosphatase. Phosphorylated by PLK4. Phosphorylated by PLK1, leading to activate the phosphatase activity. Phosphorylation by PLK3 at Ser-192 promotes nuclear translocation. Ser-199 is a minor phosphorylation site. Phosphorylation by CDK1 occurs at G2 and G2-M transition and leads to increased activity.

Its subcellular location is the nucleus. The enzyme catalyses O-phospho-L-tyrosyl-[protein] + H2O = L-tyrosyl-[protein] + phosphate. Functions as a dosage-dependent inducer in mitotic control. Tyrosine protein phosphatase required for progression of the cell cycle. When phosphorylated, highly effective in activating G2 cells into prophase. Directly dephosphorylates CDK1 and activates its kinase activity. This Bos taurus (Bovine) protein is M-phase inducer phosphatase 3 (CDC25C).